An 887-amino-acid polypeptide reads, in one-letter code: Autotaxin (887 aa).

The signal sequence occupies residues 1–27 (MARQGCLGSFQVISLFTFAISVNICLG). Positions 28–35 (FTASRIKR) are cleaved as a propeptide — removed by furin. N53 is a glycosylation site (N-linked (GlcNAc...) asparagine). SMB domains follow at residues 54-97 (TSGS…LKTA) and 98-142 (RGWE…GESH). Intrachain disulfides connect C58/C75, C62/C93, C73/C86, C79/C85, C102/C119, C107/C137, C117/C130, C123/C129, C148/C194, and C156/C350. The short motif at 126–128 (RGD) is the Cell attachment site element. A phosphodiesterase region spans residues 144–501 (VDDDCEEIKV…PTFKYRTKVP (358 aa)). D171 and T209 together coordinate Zn(2+). T209 functions as the Nucleophile in the catalytic mechanism. Residues T209, N230, and D311 each contribute to the 1-(9Z-octadecenoyl)-sn-glycero-3-phosphate site. Positions 209, 230, and 311 each coordinate 1-hexadecanoyl-sn-glycero-3-phosphate. 1-tetradecanoyl-sn-glycerol 3-phosphate-binding residues include T209, N230, and D311. The Zn(2+) site is built by D311, H315, D358, and H359. Intrachain disulfides connect C366-C468, C413-C830, C566-C691, C568-C676, and C799-C809. 2 N-linked (GlcNAc...) asparagine glycosylation sites follow: N398 and N410. Position 474 (H474) interacts with Zn(2+). H474 is a binding site for 1-(9Z-octadecenoyl)-sn-glycero-3-phosphate. H474 serves as a coordination point for 1-hexadecanoyl-sn-glycero-3-phosphate. H474 contributes to the 1-tetradecanoyl-sn-glycerol 3-phosphate binding site. An N-linked (GlcNAc...) asparagine glycan is attached at N524. A compositionally biased stretch (basic and acidic residues) spans 586–607 (HTKGSTEAETGKFRGSKHENKK). Residues 586–615 (HTKGSTEAETGKFRGSKHENKKNLNGSVEP) form a disordered region. An N-linked (GlcNAc...) asparagine glycan is attached at N610. A nuclease-like domain region spans residues 622–887 (LYGRPAVLYR…TYLHTYESEI (266 aa)). 5 residues coordinate Ca(2+): D764, N766, D768, L770, and D772. An N-linked (GlcNAc...) asparagine glycan is attached at N831. The tract at residues 854–875 (IEHLTGLDFYRKTSRSYSEILT) is required for secretion.

Belongs to the nucleotide pyrophosphatase/phosphodiesterase family. The cofactor is Zn(2+). Ca(2+) serves as cofactor. Post-translationally, N-glycosylation, but not furin-cleavage, plays a critical role on secretion and on lysoPLD activity. The interdomain disulfide bond between Cys-413 and Cys-830 is essential for catalytic activity. In terms of tissue distribution, abundantly expressed in cerebrum and cerebellum. Localized in secretory epithelial cells in the brain and the eye including choroid plexus epithelial cells, ciliary epithelial cells, iris pigment epithelial cells, and retinal pigment cells.

It is found in the secreted. It catalyses the reaction a 1-O-alkyl-sn-glycero-3-phosphoethanolamine + H2O = a 1-O-alkyl-sn-glycero-3-phosphate + ethanolamine + H(+). The enzyme catalyses a 1-acyl-sn-glycero-3-phosphoethanolamine + H2O = a 1-acyl-sn-glycero-3-phosphate + ethanolamine + H(+). The catalysed reaction is 1-(9Z-octadecenoyl)-sn-glycero-3-phosphoethanolamine + H2O = 1-(9Z-octadecenoyl)-sn-glycero-3-phosphate + ethanolamine + H(+). It carries out the reaction a 1-O-alkyl-sn-glycero-3-phosphocholine + H2O = a 1-O-alkyl-sn-glycero-3-phosphate + choline + H(+). It catalyses the reaction 1-O-(9Z-octadecenyl)-sn-glycero-3-phosphocholine + H2O = 1-O-(9Z-octadecenyl)-sn-glycero-3-phosphate + choline + H(+). The enzyme catalyses 1-O-hexadecyl-sn-glycero-3-phosphocholine + H2O = 1-O-hexadecyl-sn-glycero-3-phosphate + choline + H(+). The catalysed reaction is a 1-O-(1Z-alkenyl)-sn-glycero-3-phosphocholine + H2O = a 1-O-(1Z-alkenyl)-sn-glycero-3-phosphate + choline + H(+). It carries out the reaction a 1-acyl-sn-glycero-3-phosphocholine + H2O = a 1-acyl-sn-glycero-3-phosphate + choline + H(+). It catalyses the reaction 1-dodecanoyl-sn-glycero-3-phosphocholine + H2O = 1-dodecanoyl-sn-glycerol 3-phosphate + choline + H(+). The enzyme catalyses 1-(9Z-octadecenoyl)-sn-glycero-3-phosphocholine + H2O = 1-(9Z-octadecenoyl)-sn-glycero-3-phosphate + choline + H(+). The catalysed reaction is 1-tetradecanoyl-sn-glycero-3-phosphocholine + H2O = 1-tetradecanoyl-sn-glycerol 3-phosphate + choline + H(+). It carries out the reaction 1-decanoyl-sn-glycero-3-phosphocholine + H2O = 1-decanoyl-sn-glycero-3-phosphate + choline + H(+). It catalyses the reaction 1-octadecanoyl-sn-glycero-3-phosphocholine + H2O = 1-octadecanoyl-sn-glycero-3-phosphate + choline + H(+). The enzyme catalyses 1-hexadecanoyl-sn-glycero-3-phosphocholine + H2O = 1-hexadecanoyl-sn-glycero-3-phosphate + choline + H(+). The catalysed reaction is 1-hexanoyl-sn-glycero-3-phosphocholine + H2O = 1-hexanoyl-sn-glycero-3-phosphate + choline + H(+). It carries out the reaction 1-(9Z,12Z)-octadecadienoyl-sn-glycero-3-phosphocholine + H2O = 1-(9Z,12Z)-octadecadienoyl-sn-glycero-3-phosphate + choline + H(+). It catalyses the reaction sphing-4-enine-phosphocholine + H2O = sphing-4-enine 1-phosphate + choline + H(+). The enzyme catalyses 1-(5Z,8Z,11Z,14Z-eicosatetraenoyl)-sn-glycero-3-phosphocholine + H2O = 1-(5Z,8Z,11Z,14Z-eicosatetraenoyl)-sn-glycero-3-phosphate + choline + H(+). The catalysed reaction is a 2-acyl-sn-glycero-3-phosphocholine + H2O = a 2-acyl-sn-glycerol 3-phosphate + choline + H(+). It carries out the reaction a 1,2-diacyl-sn-glycero-3-phosphocholine + H2O = a 1,2-diacyl-sn-glycero-3-phosphate + choline + H(+). It catalyses the reaction 1,2-dioctanoyl-sn-glycero-3-phosphocholine + H2O = 1,2-dioctanoyl-sn-glycero-3-phosphate + choline + H(+). The enzyme catalyses 1,2-didecanoyl-sn-glycero-3-phosphocholine + H2O = 1,2-didecanoyl-sn-glycero-3-phosphate + choline + H(+). The catalysed reaction is a 1-acyl-sn-glycero-3-phospho-L-serine + H2O = a 1-acyl-sn-glycero-3-phosphate + L-serine + H(+). It carries out the reaction 1-(9Z-octadecenoyl)-sn-glycero-3-phospho-L-serine + H2O = 1-(9Z-octadecenoyl)-sn-glycero-3-phosphate + L-serine + H(+). It catalyses the reaction a 2-acyl-sn-glycero-3-phospho-L-serine + H2O = a 2-acyl-sn-glycerol 3-phosphate + L-serine + H(+). Its activity is regulated as follows. Inhibited by vanadate. Inhibited by micromolar levels of bile salts, such as tauroursodeoxycholate. Not inhibited by taurodeoxycholate. Not inhibited by hydroxysterols, such as 7-hydroxycholesterol, testosterone, dexamethasone and prednisolone. Inhibited by EDTA and EGTA. Secreted lysophospholipase D that hydrolyzes lysophospholipids to produce the signaling molecule lysophosphatidic acid (LPA) in extracellular fluids. Its major substrate is lysophosphatidylcholine. Can also act on sphingosylphosphorylcholine producing sphingosine-1-phosphate, a modulator of cell motility. Can hydrolyze, in vitro, bis-pNPP, to some extent pNP-TMP, and barely ATP. Involved in several motility-related processes such as angiogenesis and neurite outgrowth. Acts as an angiogenic factor by stimulating migration of smooth muscle cells and microtubule formation. Stimulates migration of melanoma cells, probably via a pertussis toxin-sensitive G protein. May have a role in induction of parturition. Possible involvement in cell proliferation and adipose tissue development. Required for LPA production in activated platelets, cleaves the sn-1 lysophospholipids to generate sn-1 lysophosphatidic acids containing predominantly 18:2 and 20:4 fatty acids. Shows a preference for the sn-1 to the sn-2 isomer of 1-O-alkyl-sn-glycero-3-phosphocholine (lyso-PAF). In Rattus norvegicus (Rat), this protein is Autotaxin.